The sequence spans 196 residues: Peptide deformylase (196 aa).

The Fe cation site is built by cysteine 123 and histidine 166. Glutamate 167 is an active-site residue. Residue histidine 170 participates in Fe cation binding.

This sequence belongs to the polypeptide deformylase family. The cofactor is Fe(2+).

It catalyses the reaction N-terminal N-formyl-L-methionyl-[peptide] + H2O = N-terminal L-methionyl-[peptide] + formate. Functionally, removes the formyl group from the N-terminal Met of newly synthesized proteins. Requires at least a dipeptide for an efficient rate of reaction. N-terminal L-methionine is a prerequisite for activity but the enzyme has broad specificity at other positions. The polypeptide is Peptide deformylase (Lactococcus lactis subsp. lactis (strain IL1403) (Streptococcus lactis)).